Reading from the N-terminus, the 147-residue chain is Hemoglobin subunit epsilon (147 aa).

Residues 3–147 enclose the Globin domain; it reads HFTAEEKAAI…VAIALGHKYH (145 aa). Phosphoserine occurs at positions 14 and 51. Heme b is bound by residues histidine 64 and histidine 93.

It belongs to the globin family. In terms of assembly, heterotetramer of two alpha chains and two epsilon chains in early embryonic hemoglobin Gower-2; two zeta chains and two epsilon chains in early embryonic hemoglobin Gower-1. In terms of tissue distribution, red blood cells.

Functionally, the epsilon chain is a beta-type chain of early mammalian embryonic hemoglobin. The chain is Hemoglobin subunit epsilon (HBE1) from Alouatta belzebul (Red-handed howler monkey).